A 147-amino-acid polypeptide reads, in one-letter code: MSQRVSYYEIAPEGMKIMMDMEKYTKQSSINRTTRELIKIRVSQMNGCAFCIDMHTSDARKMGETEQRIYCLHAWNECDFYSPEEKAALELSEHITLIPSKRVPDELYHRVREHYDEEQYVDLVLIINQINSWNRISIAMGNRAASK.

This is an uncharacterized protein from Bacillus subtilis (strain 168).